Reading from the N-terminus, the 217-residue chain is Lipid transferase CIDEA (217 aa).

Residues 33 to 110 (PARPFRVSNH…ILEKGQKWTP (78 aa)) enclose the CIDE-N domain. The segment at 163-180 (CTSFKAVLRNLLRFMSYA) is amphipathic helix.

Belongs to the CIDE family. Homodimer. Interacts with CIDEC. Directly interacts with CEBPB. Interacts with isoform CLSTN3beta of CLSTN3; inhibiting the lipid transferase activity of CIDEA. Highly expressed in brown adipose tissue and, at lower levels, in white adipose tissue (at protein level). Undetectable in undifferentiated preadipocytes. Expressed in mammary gland during pregnancy and lactation, in epithelial cells, but not in the surrounding adipose tissue. Secreted into milk via milk fat globules.

Its subcellular location is the lipid droplet. The protein localises to the nucleus. It catalyses the reaction a triacyl-sn-glycerol(in) = a triacyl-sn-glycerol(out). Functionally, lipid transferase that promotes unilocular lipid droplet formation by mediating lipid droplet fusion. Lipid droplet fusion promotes their enlargement, restricting lipolysis and favoring lipid storage. Localizes on the lipid droplet surface, at focal contact sites between lipid droplets, and mediates atypical lipid droplet fusion by promoting directional net neutral lipid transfer from the smaller to larger lipid droplets. The transfer direction may be driven by the internal pressure difference between the contacting lipid droplet pair and occurs at a lower rate than that promoted by CIDEC. May also act as a CEBPB coactivator in epithelial cells to control the expression of a subset of CEBPB downstream target genes, including ID2, IGF1, PRLR, SOCS1, SOCS3, XDH, but not casein. By interacting with CEBPB, strengthens the association of CEBPB with the XDH promoter, increases histone acetylation and dissociates HDAC1 from the promoter. When overexpressed, induces apoptosis; the physiological significance of its role in apoptosis is unclear. In Mus musculus (Mouse), this protein is Lipid transferase CIDEA.